A 2225-amino-acid chain; its full sequence is Nonribisomal peptide synthetase notE' (2225 aa).

The segment at 24–59 (TVRESLSSSPSPLPSLASPVSSGSEPPAFGETQPQS) is disordered. Positions 28–49 (SLSSSPSPLPSLASPVSSGSEP) are enriched in low complexity. The segment at 83-482 (QERCKEAPQS…GRRDGQLKIR (400 aa)) is adenylation 1. One can recognise a Carrier 1 domain in the interval 614–690 (SPTTATELML…EQAQRATPMT (77 aa)). O-(pantetheine 4'-phosphoryl)serine is present on S651. Positions 730-1142 (EDIYPCTPLQ…DLASPLDQDL (413 aa)) are condensation 1. The adenylation 2 stretch occupies residues 1164–1563 (AQAMQQPSRQ…GRRDTQVKVR (400 aa)). The Carrier 2 domain maps to 1699–1775 (PVSHGAELRL…DLARCTGEEQ (77 aa)). S1736 carries the post-translational modification O-(pantetheine 4'-phosphoryl)serine. A condensation 2 region spans residues 1827–2138 (FAFHGEVSID…FILQHQNIDM (312 aa)).

The protein belongs to the NRP synthetase family.

It catalyses the reaction L-proline + L-tryptophan + 2 ATP = brevianamide F + 2 AMP + 2 diphosphate + 2 H(+). It participates in alkaloid biosynthesis. Nonribisomal peptide synthetase; part of the gene cluster that mediates the biosynthesis of notoamide, a fungal indole alkaloid that belongs to a family of natural products containing a characteristic bicyclo[2.2.2]diazaoctane core. The first step of notoamide biosynthesis involves coupling of L-proline and L-tryptophan by the bimodular NRPS notE', to produce cyclo-L-tryptophan-L-proline called brevianamide F. The reverse prenyltransferase notF' then acts as a deoxybrevianamide E synthase and converts brevianamide F to deoxybrevianamide E via reverse prenylation at C-2 of the indole ring leading to the bicyclo[2.2.2]diazaoctane core. Deoxybrevianamide E is further hydroxylated at C-6 of the indole ring, likely catalyzed by the cytochrome P450 monooxygenase notG', to yield 6-hydroxy-deoxybrevianamide E. 6-hydroxy-deoxybrevianamide E is a specific substrate of the prenyltransferase notC' for normal prenylation at C-7 to produce 6-hydroxy-7-prenyl-deoxybrevianamide, also called notoamide S. As the proposed pivotal branching point in notoamide biosynthesis, notoamide S can be diverted to notoamide E through an oxidative pyran ring closure putatively catalyzed by either notH' cytochrome P450 monooxygenase or the notD' FAD-linked oxidoreductase. This step would be followed by an indole 2,3-epoxidation-initiated pinacol-like rearrangement catalyzed by the notB' FAD-dependent monooxygenase leading to the formation of notoamide C and notoamide D. On the other hand notoamide S is converted to notoamide T by notH' (or notD'), a bifunctional oxidase that also functions as the intramolecular Diels-Alderase responsible for generation of (-)-notoamide T. To generate antipodal (+)-notoaminide T, notH (or notD) in Aspergillus strain MF297-2 is expected to catalyze a Diels-Alder reaction leading to the opposite stereochemistry. The remaining oxidoreductase notD' (or notH') likely catalyzes the oxidative pyran ring formation to yield (-)-stephacidin A. The FAD-dependent monooxygenase notI' is highly similar to notB' and is predicted to catalyze a similar conversion from (-)-stephacidin A to (+)-notoamide B via the 2,3-epoxidation of (-)-stephacidin A followed by a pinacol-type rearrangement. Finally, it remains unclear which enzyme could be responsible for the final hydroxylation steps leading to notoamide A and sclerotiamide. The polypeptide is Nonribisomal peptide synthetase notE' (Aspergillus versicolor).